The sequence spans 291 residues: MTKDRLSALKAAQSEDEQDDDMHMDTGNAQYMEEFFEQVEEIRGSVDIIANNVEEVKKKHSAILSNPVNDQKTKEELDELMAVIKRAANKVRGKLKLIENAIDHDEQGAGNADLRIRKTQHSTLSRRFVEVMTDYNKTQTDYRERCKGRIQRQLDIAGKQVGDEDLEEMIESGNPGVFTQGIITDTQQAKQTLADIEARHNDIMKLESSIRELHDMFMDMAMLVESQGEMVDRIEYNVEHAKEFVDRAVADTKKAVQYQSKARRKKICILVTGVILITGLIIFILFYAKVL.

The disordered stretch occupies residues 1–24 (MTKDRLSALKAAQSEDEQDDDMHM). The Cytoplasmic segment spans residues 1 to 266 (MTKDRLSALK…QYQSKARRKK (266 aa)). A coiled-coil region spans residues 69–95 (NDQKTKEELDELMAVIKRAANKVRGKL). Residues 193–255 (LADIEARHND…DRAVADTKKA (63 aa)) enclose the t-SNARE coiled-coil homology domain. Residues 267–287 (ICILVTGVILITGLIIFILFY) traverse the membrane as a helical; Anchor for type IV membrane protein segment. Residues 288–291 (AKVL) lie on the Extracellular side of the membrane.

This sequence belongs to the syntaxin family. In terms of assembly, interacts (via N-terminus, in open or in closed conformation) with unc-18; the interaction is direct. Interaction in open conformation with unc-18 promotes synaptic vesicle docking and tethering. Interaction via N-terminus with unc-18 mediates the secretion of the neurotransmitter acetylcholine from cholinergic motor neurons. Interaction with unc-18 is reduced in the presence of unc-13. Expressed throughout the head ganglion, nerve ring, ventral cord, dorsal cord, intestine, vulva and spermatheca.

It is found in the cell membrane. Its subcellular location is the cell projection. The protein localises to the axon. The protein resides in the dendrite. It localises to the perikaryon. In terms of biological role, plays a critical role in several secretory processes, including cuticle secretion and neurotransmitter release, and probably assists in neuronal membrane maturation or the final stages of neuronal differentiation. Plays a role in synaptic vesicle docking and tethering through its association with unc-18. Through binding to unc-18 mediates the release of the neurotransmitter acetylcholine from cholinergic motor neurons, and thereby promotes locomotory behaviors. Essential for embryonic viability and development. Has a role in dauer formation and adult life span. Required for locomotion. Probably by regulating neuronal transmission downstream of lin-3 and receptor lin-23 and phospholipase plc-3 and upstream of innexin unc-7 and egl-4/PKG in ALA neurons, involved in the decrease in pharyngeal pumping during the quiescent state that precedes each larval molt. In Caenorhabditis elegans, this protein is Syntaxin-1A homolog.